Consider the following 355-residue polypeptide: Methylthioribose-1-phosphate isomerase (355 aa).

Substrate is bound by residues 47-49 (RGA), R91, and Q199. Catalysis depends on D240, which acts as the Proton donor. 250-251 (NK) is a binding site for substrate.

The protein belongs to the eIF-2B alpha/beta/delta subunits family. MtnA subfamily.

It catalyses the reaction 5-(methylsulfanyl)-alpha-D-ribose 1-phosphate = 5-(methylsulfanyl)-D-ribulose 1-phosphate. The protein operates within amino-acid biosynthesis; L-methionine biosynthesis via salvage pathway; L-methionine from S-methyl-5-thio-alpha-D-ribose 1-phosphate: step 1/6. In terms of biological role, catalyzes the interconversion of methylthioribose-1-phosphate (MTR-1-P) into methylthioribulose-1-phosphate (MTRu-1-P). The protein is Methylthioribose-1-phosphate isomerase of Oleidesulfovibrio alaskensis (strain ATCC BAA-1058 / DSM 17464 / G20) (Desulfovibrio alaskensis).